Reading from the N-terminus, the 121-residue chain is Large ribosomal subunit protein uL14 (121 aa).

It belongs to the universal ribosomal protein uL14 family. In terms of assembly, part of the 50S ribosomal subunit. Forms a cluster with proteins L3 and L19. In the 70S ribosome, L14 and L19 interact and together make contacts with the 16S rRNA in bridges B5 and B8.

Its function is as follows. Binds to 23S rRNA. Forms part of two intersubunit bridges in the 70S ribosome. In Prochlorococcus marinus (strain MIT 9303), this protein is Large ribosomal subunit protein uL14.